Reading from the N-terminus, the 455-residue chain is Proline--tRNA ligase (455 aa).

Residues Thr101, Glu103, and Arg132 each contribute to the L-proline site. 4 residues coordinate ATP: Arg132, Glu134, Gln216, and Thr219. His221 contacts L-proline. The ATP site is built by Ser253 and Arg255. The interval 329-359 is interaction with tRNA; the sequence is EIKGVPLRIEVGPKDIENKKITLFRRDTMEK.

The protein belongs to the class-II aminoacyl-tRNA synthetase family. ProS type 3 subfamily. As to quaternary structure, homodimer. The dimer is functionally asymmetric: only one of the two active sites at a time is able to form prolyl-adenylate, and only one tRNA molecule binds per dimer.

The protein localises to the cytoplasm. It catalyses the reaction tRNA(Pro) + L-proline + ATP = L-prolyl-tRNA(Pro) + AMP + diphosphate. Inhibited by high concentrations of prolinamide. Functionally, catalyzes the attachment of proline to tRNA(Pro) in a two-step reaction: proline is first activated by ATP to form Pro-AMP and then transferred to the acceptor end of tRNA(Pro). Can inadvertently accommodate and process non-cognate amino acids such as cysteine and alanine. This Methanocaldococcus jannaschii (strain ATCC 43067 / DSM 2661 / JAL-1 / JCM 10045 / NBRC 100440) (Methanococcus jannaschii) protein is Proline--tRNA ligase (proS).